We begin with the raw amino-acid sequence, 430 residues long: MSTVVLVGAQWGDEGKGKLTDYLAREADLVVRYQGGNNAGHTVVVEGQEFKLHLIPSGILHPDKVCVIGNGVVIDPGVLHRELEMLRAAGRPLAALYISERAHVIMPYHRQCDELEEDCPESLRRIGTTRRGIGPAYADKYAREGLRVVDLLEAGAEERLKLIIRRKGEILGRIHRAPAPDPERVAQEYLDHAEMLRPFVRDTSLLVHEAVRAGRNVLFEGAQGTLLDIDHGTYPYVTSSNPTAGGAAVGTGIGPRVIDTVIGVTKAYTTRVGDGPFPTELKDETGEHLRAAGREYGTTTGRPRRCGWLDTVITRYAARVNSLDYLAVTKLDVLTGLPVLRICRAYRYQGREIHDFPSRLSVLAGCEPVYEELPGWTEDLTGVRSFEELPAAARAYLDRLAELSGVPLGVVSVGPGREQTLPLADFFHRR.

Residues 12–18 and 40–42 each bind GTP; these read GDEGKGK and GHT. The active-site Proton acceptor is Asp13. Mg(2+) is bound by residues Asp13 and Gly40. IMP-binding positions include 13–16, 38–41, Thr129, Arg143, Gln223, Thr238, and Arg302; these read DEGK and NAGH. The active-site Proton donor is the His41. 298–304 contacts substrate; it reads TTTGRPR. GTP is bound by residues Arg304, 330-332, and 412-414; these read KLD and SVG.

It belongs to the adenylosuccinate synthetase family. Homodimer. Mg(2+) is required as a cofactor.

The protein localises to the cytoplasm. It carries out the reaction IMP + L-aspartate + GTP = N(6)-(1,2-dicarboxyethyl)-AMP + GDP + phosphate + 2 H(+). It functions in the pathway purine metabolism; AMP biosynthesis via de novo pathway; AMP from IMP: step 1/2. Plays an important role in the de novo pathway of purine nucleotide biosynthesis. Catalyzes the first committed step in the biosynthesis of AMP from IMP. This Desulforudis audaxviator (strain MP104C) protein is Adenylosuccinate synthetase.